The primary structure comprises 419 residues: Zinc finger protein Pegasus (419 aa).

K5 participates in a covalent cross-link: Glycyl lysine isopeptide (Lys-Gly) (interchain with G-Cter in SUMO2). 3 consecutive C2H2-type zinc fingers follow at residues 82–104 (LKCR…IRIH), 110–132 (HRCH…MRSH), and 138–161 (YKCE…RRKH). K185 participates in a covalent cross-link: Glycyl lysine isopeptide (Lys-Gly) (interchain with G-Cter in SUMO2). A compositionally biased stretch (polar residues) spans 223 to 236 (QTDSYESMAKTTPT). 2 disordered regions span residues 223-245 (QTDS…DPQE) and 288-356 (MQQP…PTLP). The segment covering 289–311 (QQPSAQAVVSAVSASLPQSSSPA) has biased composition (low complexity). Residues 332–349 (SEPSAHTSTPSMGNSQPS) show a composition bias toward polar residues. 2 C2H2-type zinc fingers span residues 364-386 (HHCQ…MGCH) and 392-416 (FQCN…RGQH).

This sequence belongs to the Ikaros C2H2-type zinc-finger protein family. Self-associates. Interacts with other family members; IKZF1, IKZF2, IKZF3 and IKZF4.

It localises to the nucleus. Functionally, transcriptional repressor that binds the core 5'GNNTGTNG-3' DNA consensus sequence. Involved in megakaryocyte differentiation. This chain is Zinc finger protein Pegasus (IKZF5), found in Bos taurus (Bovine).